The sequence spans 267 residues: Phosphonates import ATP-binding protein PhnC 2 (267 aa).

Positions 3–247 constitute an ABC transporter domain; it reads LSLDGVDLVH…ALDALYANEQ (245 aa). 36-43 contacts ATP; it reads GPSGAGKT.

It belongs to the ABC transporter superfamily. Phosphonates importer (TC 3.A.1.9.1) family. As to quaternary structure, the complex is composed of two ATP-binding proteins (PhnC), two transmembrane proteins (PhnE) and a solute-binding protein (PhnD).

It is found in the cell inner membrane. It catalyses the reaction phosphonate(out) + ATP + H2O = phosphonate(in) + ADP + phosphate + H(+). Its function is as follows. Part of the ABC transporter complex PhnCDE involved in phosphonates import. Responsible for energy coupling to the transport system. This is Phosphonates import ATP-binding protein PhnC 2 from Pseudomonas aeruginosa (strain UCBPP-PA14).